The sequence spans 663 residues: Probable rhamnogalacturonate lyase B (663 aa).

A signal peptide spans 1-19; sequence MRLRTSLGVASACASVASA. N-linked (GlcNAc...) asparagine glycans are attached at residues asparagine 27, asparagine 110, asparagine 143, asparagine 239, asparagine 285, asparagine 495, asparagine 535, asparagine 569, asparagine 597, and asparagine 638.

Belongs to the polysaccharide lyase 4 family.

Its subcellular location is the secreted. The enzyme catalyses Endotype eliminative cleavage of L-alpha-rhamnopyranosyl-(1-&gt;4)-alpha-D-galactopyranosyluronic acid bonds of rhamnogalacturonan I domains in ramified hairy regions of pectin leaving L-rhamnopyranose at the reducing end and 4-deoxy-4,5-unsaturated D-galactopyranosyluronic acid at the non-reducing end.. Functionally, pectinolytic enzymes consist of four classes of enzymes: pectin lyase, polygalacturonase, pectin methylesterase and rhamnogalacturonase. Degrades the rhamnogalacturonan I (RG-I) backbone of pectin. In Aspergillus flavus (strain ATCC 200026 / FGSC A1120 / IAM 13836 / NRRL 3357 / JCM 12722 / SRRC 167), this protein is Probable rhamnogalacturonate lyase B (rglB).